The primary structure comprises 845 residues: Extended synaptotagmin-2 (845 aa).

The segment covering 1-17 (MSSAGGEGPEAGPGRAG) has biased composition (gly residues). The tract at residues 1–26 (MSSAGGEGPEAGPGRAGGRSEPEAPG) is disordered. Residues 1–27 (MSSAGGEGPEAGPGRAGGRSEPEAPGS) are Cytoplasmic-facing. A helical membrane pass occupies residues 28–48 (ALSVDLPGLLGQLARSFALLL). Residues 49–51 (PVY) lie on the Lumenal side of the membrane. A helical transmembrane segment spans residues 52–72 (ALGYLGLSFSWVLLALGLLAW). Residues 73–845 (CRRSRGLKAS…EDGTRPQVIT (773 aa)) are Cytoplasmic-facing. The SMP-LTD domain occupies 115 to 294 (DTERAEWLNK…LPNRITVPLV (180 aa)). C2 domains lie at 293-413 (LVSE…DEWF) and 442-563 (VLAD…QLSN). 9 residues coordinate Ca(2+): K324, D325, D337, D384, E385, D386, D388, D390, and D391. A disordered region spans residues 584–664 (QERPPDYQHS…RDLGRSSSSL (81 aa)). Over residues 612-628 (SQMSASPGTGGANTAPS) the composition is skewed to polar residues. 2 positions are modified to phosphoserine: S615 and S617. Residue T629 is modified to Phosphothreonine. Over residues 634-645 (VDDKPAMEEKPQ) the composition is skewed to basic and acidic residues. Residues S660, S662, S663, S667, S679, S682, and S685 each carry the phosphoserine modification. In terms of domain architecture, C2 3 spans 710-832 (PLGQIQLTIR…ELAKGWTQWY (123 aa)). Residues 757–764 (KRRSGRRK) form a required for phosphatidylinositol 4,5-bisphosphate-dependent location at the cell membrane region.

It belongs to the extended synaptotagmin family. In terms of assembly, homodimer. Interacts with ESYT1 and ESYT3. Interacts with FGFR1 that has been activated by FGF1 binding. Interacts with the AP-2 complex; identified in a complex with the AP-2 complex and FGFR1.

It localises to the cell membrane. The protein resides in the endoplasmic reticulum membrane. Tethers the endoplasmic reticulum to the cell membrane and promotes the formation of appositions between the endoplasmic reticulum and the cell membrane. Binds glycerophospholipids in a barrel-like domain and may play a role in cellular lipid transport. Plays a role in FGF signaling via its role in the rapid internalization of FGFR1 that has been activated by FGF1 binding; this occurs most likely via the AP-2 complex. Promotes the localization of SACM1L at endoplasmic reticulum-plasma membrane contact sites (EPCS). This Mus musculus (Mouse) protein is Extended synaptotagmin-2 (Esyt2).